The primary structure comprises 203 residues: MVRLNVKPTRMELNNLKERLTTAERGHKLLKDKRDELMRRFISLIRENNQLRKEVESYLIDNLKSFAVAKSLKNSQMVEELFSIPSKEIELFVEKENIMSVTVPRMHMNITSQNENSEYSYLSSNSEMDDVFATMNSLIYKLLRLAEVEKTCQLMADEIEKTRRRVNGLEYSIIPNLSETIHYIELKLEEAERANLVRIMKVK.

This sequence belongs to the V-ATPase D subunit family.

Functionally, produces ATP from ADP in the presence of a proton gradient across the membrane. This Streptococcus pneumoniae serotype 19F (strain G54) protein is V-type ATP synthase subunit D.